The sequence spans 213 residues: Serine protease inhibitor 5 (213 aa).

The first 22 residues, 1 to 22 (MKCLFLLCLCLVPIVVFSSTFT), serve as a signal peptide directing secretion. Positions 23–28 (SQNPIN) are excised as a propeptide. The short motif at 25–30 (NPINLP) is the Vacuolar targeting signal element. Intrachain disulfides connect cysteine 76–cysteine 125 and cysteine 174–cysteine 183.

This sequence belongs to the protease inhibitor I3 (leguminous Kunitz-type inhibitor) family.

It localises to the vacuole. Inhibitor of trypsin (serine protease). Protects the plant by inhibiting proteases of invading organisms. This is Serine protease inhibitor 5 from Solanum tuberosum (Potato).